Consider the following 71-residue polypeptide: Frenatin 2.3S (71 aa).

The signal sequence occupies residues 1–22 (MAFLKKSLFLVLFLGLVSLSMG). A disordered region spans residues 21-56 (MGEREKREEEEEEEEENKEEEANEEGKGESEEKRGL). Positions 23–54 (EREKREEEEEEEEENKEEEANEEGKGESEEKR) are excised as a propeptide. A compositionally biased stretch (acidic residues) spans 28–43 (EEEEEEEEENKEEEAN). Positions 44–55 (EEGKGESEEKRG) are enriched in basic and acidic residues. Glycine 70 is subject to Glycine amide; in Frenatin 2.1S.

Belongs to the frog skin active peptide (FSAP) family. Frenatin subfamily. In terms of processing, frenatin 2.3S is not amidated. In terms of tissue distribution, expressed by the skin glands.

The protein resides in the secreted. Its function is as follows. Antimicrobial peptide with potent activity against Gram-negative bacteria. Shows immunostimulatory actions both in vitro and in vivo. In vitro, is cytotoxic to non-small cell lung adenocarcinoma A549 cells. Also, stimulates production of pro-inflammatory cytokines by mouse peritoneal macrophages and down-regulates production of the anti-inflammatory cytokine IL-10 by lipopolysaccharide (LPS)-stimulated cells. In vivo, intraperitoneal injection in mice enhances the activation state and homing capacity of Th1 type lymphocytes and promotes the recruitment, activation and tumoricidal capacities of peritoneal NK cells. Has a very weak activity in stimulation of insulin release and a weak hemolytic activity. In terms of biological role, antimicrobial peptide with potent activity against some Gram-positive and Gram-negative bacteria. Has a multifunctional mode of action. It displays depolarization and bacterial cell leakage, and can also internalize into bacterial cells and alter specific gene expression involved in bacterial resistance mechanisms. Does not agglutinate bacteria and lipid vesicles, even a high concentrations. Also displays moderate cellular protection against yellow fever virus (YFV)-infected Vero cells without causing significant cytotoxicity. Shows a weak hemolytic activity, and is not cytotoxic to monocytes. Frenatin 2.3S (version without Gly-71) shows no or very weak antibacterial activity, shows no or very weak cytotoxicity to lung adenocarcinoma A549 cells and shows very weak hemolysis. It only stimulates production of pro-inflammatory cytokines IL-23 (but not IL-1beta and TNF-alpha) by mouse peritoneal macrophages and has no effect on the production of the anti-inflammatory cytokine IL-10. Frenatin 2.3S (version without Gly-71) very weakly stimulates insulin release. This is Frenatin 2.3S from Sphaenorhynchus lacteus (Orinoco lime treefrog).